An 85-amino-acid polypeptide reads, in one-letter code: Beta-toxin Ct6 (85 aa).

Positions 1–18 (MKTFVLALCLVLIGMVYA) are cleaved as a signal peptide. The LCN-type CS-alpha/beta domain occupies 19-84 (KDGYLVSKHT…VYPLPNKSCG (66 aa)). Disulfide bonds link C30–C83, C34–C59, C43–C64, and C47–C66. C83 carries the cysteine amide modification.

This sequence belongs to the long (4 C-C) scorpion toxin superfamily. Sodium channel inhibitor family. Beta subfamily. In terms of tissue distribution, expressed by the venom gland.

Its subcellular location is the secreted. Its function is as follows. Beta toxins bind voltage-independently at site-4 of sodium channels (Nav) and shift the voltage of activation toward more negative potentials thereby affecting sodium channel activation and promoting spontaneous and repetitive firing. The sequence is that of Beta-toxin Ct6 from Centruroides tecomanus (Scorpion).